The following is a 456-amino-acid chain: 26S proteasome non-ATPase regulatory subunit 12 (456 aa).

Ala2 is modified (N-acetylalanine). Residue Lys92 forms a Glycyl lysine isopeptide (Lys-Gly) (interchain with G-Cter in SUMO1); alternate linkage. Lys92 participates in a covalent cross-link: Glycyl lysine isopeptide (Lys-Gly) (interchain with G-Cter in SUMO2); alternate. Positions 242–420 (SICKHYRAIY…GVINFQRPKD (179 aa)) constitute a PCI domain. Lys368 bears the N6-acetyllysine mark.

This sequence belongs to the proteasome subunit p55 family. In terms of assembly, component of the 19S proteasome regulatory particle complex. The 26S proteasome consists of a 20S core particle (CP) and two 19S regulatory subunits (RP). The regulatory particle is made of a lid composed of 9 subunits including PSMD12, a base containing 6 ATPases and few additional components. Interacts with ERCC6.

Its function is as follows. Component of the 26S proteasome, a multiprotein complex involved in the ATP-dependent degradation of ubiquitinated proteins. This complex plays a key role in the maintenance of protein homeostasis by removing misfolded or damaged proteins, which could impair cellular functions, and by removing proteins whose functions are no longer required. Therefore, the proteasome participates in numerous cellular processes, including cell cycle progression, apoptosis, or DNA damage repair. This is 26S proteasome non-ATPase regulatory subunit 12 (Psmd12) from Mus musculus (Mouse).